The following is a 497-amino-acid chain: Probable zinc metalloprotease TRV_03476 (497 aa).

The signal sequence occupies residues 1–24 (MRFLISSLLSGLALLTSLHAFVLA). Residues Asn100 and Asn121 are each glycosylated (N-linked (GlcNAc...) asparagine). Residues His171, Asp191, and Glu227 each contribute to the Zn(2+) site. An N-linked (GlcNAc...) asparagine glycan is attached at Asn242. Position 254 (Asp254) interacts with Zn(2+). One can recognise a Fibronectin type-III domain in the interval 411-497 (MPRNVRVNTN…ERGVAVLPFP (87 aa)). An N-linked (GlcNAc...) asparagine glycan is attached at Asn424.

It belongs to the peptidase M28 family. M28B subfamily. The cofactor is Zn(2+).

The protein resides in the secreted. This Trichophyton verrucosum (strain HKI 0517) protein is Probable zinc metalloprotease TRV_03476.